Here is a 394-residue protein sequence, read N- to C-terminus: Dual-specificity RNA methyltransferase RlmN (394 aa).

Catalysis depends on Glu115, which acts as the Proton acceptor. In terms of domain architecture, Radical SAM core spans 121 to 360 (EADRATLCVS…VIVRKTRGDD (240 aa)). A disulfide bridge links Cys128 with Cys365. 3 residues coordinate [4Fe-4S] cluster: Cys135, Cys139, and Cys142. Residues 189–190 (GE), Ser221, 243–245 (SLH), and Asn322 contribute to the S-adenosyl-L-methionine site. Cys365 serves as the catalytic S-methylcysteine intermediate.

It belongs to the radical SAM superfamily. RlmN family. It depends on [4Fe-4S] cluster as a cofactor.

Its subcellular location is the cytoplasm. The catalysed reaction is adenosine(2503) in 23S rRNA + 2 reduced [2Fe-2S]-[ferredoxin] + 2 S-adenosyl-L-methionine = 2-methyladenosine(2503) in 23S rRNA + 5'-deoxyadenosine + L-methionine + 2 oxidized [2Fe-2S]-[ferredoxin] + S-adenosyl-L-homocysteine. The enzyme catalyses adenosine(37) in tRNA + 2 reduced [2Fe-2S]-[ferredoxin] + 2 S-adenosyl-L-methionine = 2-methyladenosine(37) in tRNA + 5'-deoxyadenosine + L-methionine + 2 oxidized [2Fe-2S]-[ferredoxin] + S-adenosyl-L-homocysteine. Functionally, specifically methylates position 2 of adenine 2503 in 23S rRNA and position 2 of adenine 37 in tRNAs. m2A2503 modification seems to play a crucial role in the proofreading step occurring at the peptidyl transferase center and thus would serve to optimize ribosomal fidelity. The protein is Dual-specificity RNA methyltransferase RlmN of Pasteurella multocida (strain Pm70).